Reading from the N-terminus, the 221-residue chain is Lipoprotein-releasing system ATP-binding protein LolD (221 aa).

An ABC transporter domain is found at 8–220 (LKMISKHYKQ…YNLKHGLLNI (213 aa)). An ATP-binding site is contributed by 42–49 (GSSGSGKS).

This sequence belongs to the ABC transporter superfamily. Lipoprotein translocase (TC 3.A.1.125) family. As to quaternary structure, the complex is composed of two ATP-binding proteins (LolD) and two transmembrane proteins (LolC and LolE).

It localises to the cell inner membrane. Part of the ABC transporter complex LolCDE involved in the translocation of mature outer membrane-directed lipoproteins, from the inner membrane to the periplasmic chaperone, LolA. Responsible for the formation of the LolA-lipoprotein complex in an ATP-dependent manner. This is Lipoprotein-releasing system ATP-binding protein LolD from Rickettsia prowazekii (strain Madrid E).